The following is a 422-amino-acid chain: Phospho-N-acetylmuramoyl-pentapeptide-transferase (422 aa).

The next 9 helical transmembrane spans lie at 28–48 (LMAV…FINL), 71–91 (VGVP…PCLL), 95–115 (LDNI…SLGF), 136–156 (IIGQ…SPDV), 211–231 (AGWF…SNGA), 239–259 (GMAA…AYVS), 279–299 (LVIY…YNAY), 313–333 (IGGI…IPIL), and 399–419 (KITV…IITL).

Belongs to the glycosyltransferase 4 family. MraY subfamily. It depends on Mg(2+) as a cofactor.

The protein resides in the cell inner membrane. The enzyme catalyses UDP-N-acetyl-alpha-D-muramoyl-L-alanyl-gamma-D-glutamyl-meso-2,6-diaminopimeloyl-D-alanyl-D-alanine + di-trans,octa-cis-undecaprenyl phosphate = di-trans,octa-cis-undecaprenyl diphospho-N-acetyl-alpha-D-muramoyl-L-alanyl-D-glutamyl-meso-2,6-diaminopimeloyl-D-alanyl-D-alanine + UMP. It participates in cell wall biogenesis; peptidoglycan biosynthesis. Catalyzes the initial step of the lipid cycle reactions in the biosynthesis of the cell wall peptidoglycan: transfers peptidoglycan precursor phospho-MurNAc-pentapeptide from UDP-MurNAc-pentapeptide onto the lipid carrier undecaprenyl phosphate, yielding undecaprenyl-pyrophosphoryl-MurNAc-pentapeptide, known as lipid I. The protein is Phospho-N-acetylmuramoyl-pentapeptide-transferase of Bacteroides thetaiotaomicron (strain ATCC 29148 / DSM 2079 / JCM 5827 / CCUG 10774 / NCTC 10582 / VPI-5482 / E50).